A 433-amino-acid chain; its full sequence is Gamma-glutamyl phosphate reductase (433 aa).

Belongs to the gamma-glutamyl phosphate reductase family.

Its subcellular location is the cytoplasm. It catalyses the reaction L-glutamate 5-semialdehyde + phosphate + NADP(+) = L-glutamyl 5-phosphate + NADPH + H(+). Its pathway is amino-acid biosynthesis; L-proline biosynthesis; L-glutamate 5-semialdehyde from L-glutamate: step 2/2. Functionally, catalyzes the NADPH-dependent reduction of L-glutamate 5-phosphate into L-glutamate 5-semialdehyde and phosphate. The product spontaneously undergoes cyclization to form 1-pyrroline-5-carboxylate. The polypeptide is Gamma-glutamyl phosphate reductase (Cyanothece sp. (strain PCC 7425 / ATCC 29141)).